The sequence spans 566 residues: Protein kintoun (566 aa).

Disordered stretches follow at residues 183–298, 399–467, and 493–552; these read KYKG…TAPQ, EEEE…AETG, and QLEE…ESRI. The segment covering 208–290 has biased composition (low complexity); the sequence is PQQTTGPQQP…HQPTDPQQTT (83 aa). Basic and acidic residues predominate over residues 399–424; sequence EEEERRAEEEESRKGGDEDGELHPDC. Residues 440–467 are compositionally biased toward low complexity; it reads TPAADTHTPAADTHTPAADTHTPAAETG. Over residues 535–550 the composition is skewed to basic and acidic residues; sequence DPAHTDPAHTDPEMES.

It belongs to the PIH1 family. Kintoun subfamily.

It localises to the cytoplasm. Its subcellular location is the dynein axonemal particle. Functionally, required for cytoplasmic pre-assembly of axonemal dyneins, thereby playing a central role in motility in cilia and flagella. Involved in pre-assembly of dynein arm complexes in the cytoplasm before intraflagellar transport loads them for the ciliary compartment. This is Protein kintoun from Danio rerio (Zebrafish).